Consider the following 472-residue polypeptide: Protein translocase subunit SecD (472 aa).

Transmembrane regions (helical) follow at residues 7–27, 298–318, 326–345, 349–368, 392–414, and 432–452; these read LLLLIVVLVIGASFVLVKLPL, LVAGFVGLVLVLVFMAVYYRL, SLMIYAVLTLAAFALVGVTL, GIAGFILSIGMAVDANVLIF, AFSSILDSNVTTLIACAALFWFG, and SLFTALTCSRTLLLVIVLSLP.

This sequence belongs to the SecD/SecF family. SecD subfamily. In terms of assembly, forms a complex with SecF. Part of the essential Sec protein translocation apparatus which comprises SecA, SecYEG and auxiliary proteins SecDF. Other proteins may also be involved.

It localises to the cell inner membrane. Part of the Sec protein translocase complex. Interacts with the SecYEG preprotein conducting channel. SecDF uses the proton motive force (PMF) to complete protein translocation after the ATP-dependent function of SecA. Its function is as follows. Probably participates in protein translocation into and across both the cytoplasmic and thylakoid membranes in cyanobacterial cells. This chain is Protein translocase subunit SecD, found in Synechocystis sp. (strain ATCC 27184 / PCC 6803 / Kazusa).